We begin with the raw amino-acid sequence, 255 residues long: Phosphatidylcholine synthase (255 aa).

At 1–13 (MNPIKPPFTLNQY) the chain is on the cytoplasmic side. Residues 14–34 (FAAWFVHVFTASAACIGVFSL) form a helical membrane-spanning segment. At 35–42 (YKIYQHDY) the chain is on the periplasmic side. Residues 43–63 (VFALWLMAITVFIDAVDGSLA) form a helical membrane-spanning segment. Topologically, residues 64–76 (RLVHVKSVLPKID) are cytoplasmic. Residues 77 to 97 (GALLDNIVDYLNYVITPCFFL) form a helical membrane-spanning segment. At 98–103 (LVKPGM) the chain is on the periplasmic side. A helical membrane pass occupies residues 104 to 124 (LPADYVVPITAAITITSAYQF). Residues 125–133 (CQDDAKTPD) are Cytoplasmic-facing. A helical transmembrane segment spans residues 134–154 (HFFKGFPCYWNITVFYMYIFN). Position 155 (Thr-155) is a topological domain, periplasmic. Residues 156–175 (SMIVNTVLLSLFCVLIFIPV) traverse the membrane as a helical segment. The Cytoplasmic portion of the chain corresponds to 176-190 (KYVYPSRLDYLTESR). Residues 191–211 (VLKILMHCCSALYGISSFCLL) traverse the membrane as a helical segment. Topologically, residues 212 to 217 (VNYPET) are periplasmic. The chain crosses the membrane as a helical span at residues 218 to 238 (NKLWVSLSLGYVGMYLFLSFY). Residues 239–255 (RTYYPMFKAKITANNKD) are Cytoplasmic-facing.

It belongs to the CDP-alcohol phosphatidyltransferase class-I family. Requires Mn(2+) as cofactor.

The protein resides in the cell inner membrane. The catalysed reaction is a CDP-1,2-diacyl-sn-glycerol + choline = a 1,2-diacyl-sn-glycero-3-phosphocholine + CMP + H(+). Functionally, condenses choline with CDP-diglyceride to produce phosphatidylcholine and CMP. Affects virulence of this bacterium when there is a complete loss of phosphatidylcholine formation due to absence of both the synthase (pcs) and the methylation (pmtA) pathways. Reduced virulence results from lowered yields of bacteria within host macrophages and because of loss of high multiplicity cytotoxicity. This Legionella pneumophila subsp. pneumophila (strain Philadelphia 1 / ATCC 33152 / DSM 7513) protein is Phosphatidylcholine synthase.